Here is a 728-residue protein sequence, read N- to C-terminus: 1,4-alpha-glucan branching enzyme GlgB (728 aa).

The Nucleophile role is filled by Asp405. Catalysis depends on Glu458, which acts as the Proton donor.

Belongs to the glycosyl hydrolase 13 family. GlgB subfamily. In terms of assembly, monomer.

The enzyme catalyses Transfers a segment of a (1-&gt;4)-alpha-D-glucan chain to a primary hydroxy group in a similar glucan chain.. It participates in glycan biosynthesis; glycogen biosynthesis. In terms of biological role, catalyzes the formation of the alpha-1,6-glucosidic linkages in glycogen by scission of a 1,4-alpha-linked oligosaccharide from growing alpha-1,4-glucan chains and the subsequent attachment of the oligosaccharide to the alpha-1,6 position. The chain is 1,4-alpha-glucan branching enzyme GlgB from Escherichia coli O1:K1 / APEC.